The chain runs to 547 residues: Chaperonin GroEL (547 aa).

ATP contacts are provided by residues 30–33 (TLGP), K51, 87–91 (DGTTT), G416, 480–482 (NAA), and D496.

It belongs to the chaperonin (HSP60) family. As to quaternary structure, forms a cylinder of 14 subunits composed of two heptameric rings stacked back-to-back. Interacts with the co-chaperonin GroES.

The protein localises to the cytoplasm. The enzyme catalyses ATP + H2O + a folded polypeptide = ADP + phosphate + an unfolded polypeptide.. Its function is as follows. Together with its co-chaperonin GroES, plays an essential role in assisting protein folding. The GroEL-GroES system forms a nano-cage that allows encapsulation of the non-native substrate proteins and provides a physical environment optimized to promote and accelerate protein folding. This is Chaperonin GroEL from Pseudoalteromonas translucida (strain TAC 125).